Consider the following 459-residue polypeptide: Trigger factor (459 aa).

The 80-residue stretch at 166-245 (GDFANIDLTA…VNSVKAEELP (80 aa)) folds into the PPIase FKBP-type domain.

It belongs to the FKBP-type PPIase family. Tig subfamily.

Its subcellular location is the cytoplasm. The catalysed reaction is [protein]-peptidylproline (omega=180) = [protein]-peptidylproline (omega=0). In terms of biological role, involved in protein export. Acts as a chaperone by maintaining the newly synthesized protein in an open conformation. Functions as a peptidyl-prolyl cis-trans isomerase. The chain is Trigger factor from Bifidobacterium longum (strain DJO10A).